A 144-amino-acid chain; its full sequence is Maximins 10/H15 (144 aa).

The signal sequence occupies residues 1 to 18; that stretch reads MNFKYIVAVSFLIASAYA. A propeptide spanning residues 19–43 is cleaved from the precursor; the sequence is RSVQNDEQSLSQRDVLEEESLREIR. Ser-70 is subject to Serine amide. A propeptide spanning residues 74–123 is cleaved from the precursor; that stretch reads TAEDHEVMKRLEAVMRDLDSLDYPEEATERETRGFNQEEIANLFTKKEKR. Leu-143 is subject to Leucine amide.

Belongs to the bombinin family. In terms of tissue distribution, expressed by the skin glands.

Its subcellular location is the secreted. In terms of biological role, maximin-10 shows antimicrobial activity against bacteria and against the fungus C.albicans. It has little hemolytic activity. Functionally, maximin-H15 shows antimicrobial activity against bacteria and against the fungus C.albicans. Shows strong hemolytic activity. This chain is Maximins 10/H15, found in Bombina maxima (Giant fire-bellied toad).